Reading from the N-terminus, the 264-residue chain is H-2 class II histocompatibility antigen, I-E beta chain (264 aa).

The first 31 residues, 1 to 31 (MVWLPRVPCVAAVILLLTVLSPPVALVRNSR), serve as a signal peptide directing secretion. Residues 32 to 121 (PRFLEYSTSE…IFDNFLVPRR (90 aa)) are beta-1. The Extracellular segment spans residues 32 to 225 (PRFLEYSTSE…KAQSTSAQNK (194 aa)). Disulfide bonds link Cys42–Cys106 and Cys144–Cys200. A glycan (N-linked (GlcNAc...) asparagine) is linked at Asn46. A beta-2 region spans residues 122-215 (VEPTVTVYPT…SLTDPVTVEW (94 aa)). Positions 124–214 (PTVTVYPTKT…PSLTDPVTVE (91 aa)) constitute an Ig-like C1-type domain. The interval 216–225 (KAQSTSAQNK) is connecting peptide. Residues 226–248 (MLSGVGGFVLGLLFLGAGLFIYF) traverse the membrane as a helical segment. Residues 249–264 (RNQKGQSGLQPTGLLS) lie on the Cytoplasmic side of the membrane.

Belongs to the MHC class II family. Ubiquitinated in immature dendritic cells leading to down-regulation of MHC class II.

Its subcellular location is the membrane. The protein is H-2 class II histocompatibility antigen, I-E beta chain (H2-Eb1) of Mus musculus (Mouse).